A 115-amino-acid polypeptide reads, in one-letter code: Large ribosomal subunit protein bL19 (115 aa).

It belongs to the bacterial ribosomal protein bL19 family.

Functionally, this protein is located at the 30S-50S ribosomal subunit interface and may play a role in the structure and function of the aminoacyl-tRNA binding site. This Pectobacterium carotovorum subsp. carotovorum (strain PC1) protein is Large ribosomal subunit protein bL19.